A 397-amino-acid polypeptide reads, in one-letter code: Alpha-2B adrenergic receptor (397 aa).

The chain crosses the membrane as a helical span at residues 1 to 25 (AIAAIIIFLILFTIFGNALVILAVL). Topologically, residues 26–36 (TSRSLRAPQNL) are cytoplasmic. A helical transmembrane segment spans residues 37-62 (FLVSLAAADILVATLIIPFSLANELL). Residues 63 to 72 (GYWYFRRMWC) are Extracellular-facing. A disulfide bridge links cysteine 72 with cysteine 151. A helical membrane pass occupies residues 73–95 (KVYLALDVLFCTSSIVHLCAISL). The Cytoplasmic portion of the chain corresponds to 96 to 117 (DRYWAVSRALEYNSKRTPRRIK). The helical transmembrane segment at 118 to 140 (CIILMVWLIAAVISLPSLVYKGD) threads the bilayer. Residues 141–156 (QGPQPSGAPQCNLNQE) are Extracellular-facing. A helical membrane pass occupies residues 157-180 (TWYILASSIGSFFAPCLIMILVYL). The Cytoplasmic segment spans residues 181–361 (RIYLIAKRSH…LSREKRFTFV (181 aa)). Disordered regions lie at residues 193 to 212 (GPRA…RQVP) and 230 to 319 (AAGE…LQQP). Over residues 280-300 (SLEEEAEEEEEGEEEREEECE) the composition is skewed to acidic residues. A compositionally biased stretch (low complexity) spans 301-319 (PQALPASPASACSPPLQQP). Residues 362–385 (LAVVIGVFVLCWFPFFFSYSLGAI) form a helical membrane-spanning segment. The Extracellular portion of the chain corresponds to 386–394 (CPQQCKVPH). Residues 395–397 (DLF) form a helical membrane-spanning segment.

It belongs to the G-protein coupled receptor 1 family. Adrenergic receptor subfamily. ADRA2B sub-subfamily. As to quaternary structure, interacts with RAB26. Interacts with PPP1R9B.

The protein localises to the cell membrane. Functionally, alpha-2 adrenergic receptors mediate the catecholamine-induced inhibition of adenylate cyclase through the action of G proteins. The chain is Alpha-2B adrenergic receptor (ADRA2B) from Talpa europaea (European mole).